The sequence spans 530 residues: Structure-specific endonuclease subunit SLX1 homolog 2 (530 aa).

Residues 4-89 (RFHCVYLLTS…PTKSTRLKTQ (86 aa)) enclose the GIY-YIG domain. The segment at 232–365 (CALCSLPLRS…PSQPCPCPLC (134 aa)) adopts an SLX1-type zinc-finger fold. Disordered regions lie at residues 276 to 306 (ATMG…MDAH), 410 to 438 (NSSL…YCGD), and 474 to 502 (LPPS…RMTD). Residues 283–298 (RNERSGEYSNKIKDDS) are compositionally biased toward basic and acidic residues.

This sequence belongs to the SLX1 family. In terms of assembly, forms a heterodimer with a member of the SLX4 family. It depends on a divalent metal cation as a cofactor.

The protein resides in the nucleus. Its function is as follows. Catalytic subunit of a heterodimeric structure-specific endonuclease that resolves DNA secondary structures generated during DNA repair and recombination. Has endonuclease activity towards branched DNA substrates, introducing single-strand cuts in duplex DNA close to junctions with ss-DNA. This is Structure-specific endonuclease subunit SLX1 homolog 2 from Trypanosoma cruzi (strain CL Brener).